The following is a 302-amino-acid chain: Pyridoxal 5'-phosphate synthase subunit PdxS (302 aa).

Residue D32 participates in D-ribose 5-phosphate binding. Catalysis depends on K89, which acts as the Schiff-base intermediate with D-ribose 5-phosphate. G161 is a binding site for D-ribose 5-phosphate. Residue R173 participates in D-glyceraldehyde 3-phosphate binding. Residues G222 and G243 to S244 contribute to the D-ribose 5-phosphate site. The tract at residues G278–V302 is disordered.

This sequence belongs to the PdxS/SNZ family. In terms of assembly, in the presence of PdxT, forms a dodecamer of heterodimers.

It carries out the reaction aldehydo-D-ribose 5-phosphate + D-glyceraldehyde 3-phosphate + L-glutamine = pyridoxal 5'-phosphate + L-glutamate + phosphate + 3 H2O + H(+). It participates in cofactor biosynthesis; pyridoxal 5'-phosphate biosynthesis. Its function is as follows. Catalyzes the formation of pyridoxal 5'-phosphate from ribose 5-phosphate (RBP), glyceraldehyde 3-phosphate (G3P) and ammonia. The ammonia is provided by the PdxT subunit. Can also use ribulose 5-phosphate and dihydroxyacetone phosphate as substrates, resulting from enzyme-catalyzed isomerization of RBP and G3P, respectively. The protein is Pyridoxal 5'-phosphate synthase subunit PdxS of Halorubrum lacusprofundi (strain ATCC 49239 / DSM 5036 / JCM 8891 / ACAM 34).